Reading from the N-terminus, the 566-residue chain is Putative ABC transporter ATP-binding protein BT9727_2424 (566 aa).

ABC transporter domains are found at residues 5-246 (ISFE…GLRE) and 300-533 (LKVE…ANLK). ATP-binding positions include 39–46 (GRSGSGKS) and 333–340 (GHNGAGKS).

This sequence belongs to the ABC transporter superfamily.

It localises to the cell membrane. Functionally, probably part of an ABC transporter complex. Responsible for energy coupling to the transport system. This chain is Putative ABC transporter ATP-binding protein BT9727_2424, found in Bacillus thuringiensis subsp. konkukian (strain 97-27).